Here is a 201-residue protein sequence, read N- to C-terminus: uncharacterized protein (201 aa).

This is an uncharacterized protein from Saccharomyces cerevisiae (strain ATCC 204508 / S288c) (Baker's yeast).